A 533-amino-acid chain; its full sequence is Flavin-containing monooxygenase 5 (533 aa).

Arg5 carries the post-translational modification Dimethylated arginine. Residues 10 to 14 (GSGAS), Glu33, and 41 to 42 (LW) each bind FAD. The residue at position 54 (Ser54) is a Phosphoserine. Tyr56 is subject to Phosphotyrosine. At Ser58 the chain carries Phosphoserine. 62 to 63 (NT) serves as a coordination point for FAD. 196 to 199 (SGGD) contributes to the NADP(+) binding site. The residue at position 284 (Thr284) is a Phosphothreonine. The residue at position 401 (Ser401) is a Phosphoserine. A helical transmembrane segment spans residues 513-533 (LVTVRVLMLAVTFLAVILAYF).

It belongs to the FMO family. FAD is required as a cofactor.

The protein resides in the microsome membrane. It is found in the endoplasmic reticulum membrane. The enzyme catalyses N,N-dimethylaniline + NADPH + O2 + H(+) = N,N-dimethylaniline N-oxide + NADP(+) + H2O. It carries out the reaction NADPH + O2 + H(+) = H2O2 + NADP(+). The catalysed reaction is heptan-2-one + NADPH + O2 + H(+) = pentyl acetate + NADP(+) + H2O. It catalyses the reaction octan-3-one + NADPH + O2 + H(+) = pentyl propanoate + NADP(+) + H2O. The enzyme catalyses octan-3-one + NADPH + O2 + H(+) = ethyl hexanoate + NADP(+) + H2O. It carries out the reaction hexan-3-one + NADPH + O2 + H(+) = ethyl butanoate + NADP(+) + H2O. The catalysed reaction is hexan-3-one + NADPH + O2 + H(+) = propyl propanoate + NADP(+) + H2O. It catalyses the reaction heptan-4-one + NADPH + O2 + H(+) = propyl butanoate + NADP(+) + H2O. The enzyme catalyses (2E)-geranial + NADPH + O2 + H(+) = (1E)-2,6-dimethylhepta-1,5-dien-1-yl formate + NADP(+) + H2O. It carries out the reaction sulcatone + NADPH + O2 + H(+) = 4-methylpent-3-en-1-yl acetate + NADP(+) + H2O. Functionally, acts as a Baeyer-Villiger monooxygenase on a broad range of substrates. Catalyzes the insertion of an oxygen atom into a carbon-carbon bond adjacent to a carbonyl, which converts ketones to esters. Active on diverse carbonyl compounds, whereas soft nucleophiles are mostly non- or poorly reactive. In contrast with other forms of FMO it is non- or poorly active on 'classical' substrates such as drugs, pesticides, and dietary components containing soft nucleophilic heteroatoms. Able to oxidize drug molecules bearing a carbonyl group on an aliphatic chain, such as nabumetone and pentoxifylline. Also, in the absence of substrates, shows slow but yet significant NADPH oxidase activity. Acts as a positive modulator of cholesterol biosynthesis as well as glucose homeostasis, promoting metabolic aging via pleiotropic effects. The chain is Flavin-containing monooxygenase 5 from Rattus norvegicus (Rat).